The chain runs to 281 residues: Cell division protein DivIB (281 aa).

Positions 1–36 are disordered; the sequence is MARKRITRRDPEEELSKFLRHEPGQGQETRKLSSQL. The Cytoplasmic segment spans residues 1–46; the sequence is MARKRITRRDPEEELSKFLRHEPGQGQETRKLSSQLTSLKKERRRG. Basic and acidic residues predominate over residues 8–31; sequence RRDPEEELSKFLRHEPGQGQETRK. The chain crosses the membrane as a helical span at residues 47 to 69; it reads LLTRLGSIMAVCLLAIAFLTYYV. Residues 70 to 281 lie on the Extracellular side of the membrane; it reads SPLADVSTVR…SAEKKAYGLS (212 aa). The POTRA domain maps to 73–144; it reads ADVSTVRVLG…NTLNMQVHER (72 aa).

It belongs to the FtsQ/DivIB family. DivIB subfamily.

It is found in the cell membrane. Cell division protein that may be involved in stabilizing or promoting the assembly of the division complex. The sequence is that of Cell division protein DivIB from Lactobacillus delbrueckii subsp. bulgaricus (strain ATCC 11842 / DSM 20081 / BCRC 10696 / JCM 1002 / NBRC 13953 / NCIMB 11778 / NCTC 12712 / WDCM 00102 / Lb 14).